The primary structure comprises 513 residues: ATP synthase subunit alpha (513 aa).

169 to 176 contributes to the ATP binding site; it reads GDRQIGKT.

The protein belongs to the ATPase alpha/beta chains family. In terms of assembly, F-type ATPases have 2 components, CF(1) - the catalytic core - and CF(0) - the membrane proton channel. CF(1) has five subunits: alpha(3), beta(3), gamma(1), delta(1), epsilon(1). CF(0) has three main subunits: a(1), b(2) and c(9-12). The alpha and beta chains form an alternating ring which encloses part of the gamma chain. CF(1) is attached to CF(0) by a central stalk formed by the gamma and epsilon chains, while a peripheral stalk is formed by the delta and b chains.

The protein localises to the cell inner membrane. The enzyme catalyses ATP + H2O + 4 H(+)(in) = ADP + phosphate + 5 H(+)(out). Its function is as follows. Produces ATP from ADP in the presence of a proton gradient across the membrane. The alpha chain is a regulatory subunit. The chain is ATP synthase subunit alpha from Francisella philomiragia subsp. philomiragia (strain ATCC 25017 / CCUG 19701 / FSC 153 / O#319-036).